The following is a 334-amino-acid chain: Nucleoid-associated protein SG1574 (334 aa).

Belongs to the YejK family.

It is found in the cytoplasm. Its subcellular location is the nucleoid. The protein is Nucleoid-associated protein SG1574 of Sodalis glossinidius (strain morsitans).